A 451-amino-acid chain; its full sequence is Cyclin-dependent kinase 18 (451 aa).

Residues Ser12, Ser51, Ser66, Ser75, and Ser109 each carry the phosphoserine modification. One can recognise a Protein kinase domain in the interval 121–402; the sequence is YVKLDKLGEG…AEAALNHPYF (282 aa). ATP is bound by residues 127-135 and Lys150; that span reads LGEGTYATV. Asp242 (proton acceptor) is an active-site residue. Phosphoserine is present on residues Ser417 and Ser420.

Belongs to the protein kinase superfamily. CMGC Ser/Thr protein kinase family. CDC2/CDKX subfamily. In brain, kidney, intestine and at a much lower level, in fetal tissues.

It carries out the reaction L-seryl-[protein] + ATP = O-phospho-L-seryl-[protein] + ADP + H(+). It catalyses the reaction L-threonyl-[protein] + ATP = O-phospho-L-threonyl-[protein] + ADP + H(+). May play a role in signal transduction cascades in terminally differentiated cells. The chain is Cyclin-dependent kinase 18 (Cdk18) from Mus musculus (Mouse).